Consider the following 1077-residue polypeptide: Protein hairless (1077 aa).

7 disordered regions span residues 14-75, 97-141, 269-322, 340-368, 408-504, 533-876, and 976-1077; these read NRQT…SNNN, SSTS…HAKT, PSAA…SRPR, TLGR…DQQP, IEKP…PKAK, TTTS…PTSN, and GQPA…LSKH. Low complexity-rich tracts occupy residues 26-75, 115-130, 269-286, and 293-308; these read NINS…SNNN, TTTP…SSST, PSAA…VTTA, and STSL…IQSS. Composition is skewed to basic and acidic residues over residues 408-439 and 449-459; these read IEKP…ESKE and QPKDETVDVEM. Over residues 596-607 the composition is skewed to gly residues; it reads GSGGASSGGAGG. Positions 640–684 are enriched in low complexity; it reads PGSSSSSTSPATLSTQPTRLNSSYSIHSLLGGSSGSGSSSFSSSG. Polar residues predominate over residues 704–713; sequence SMYQPSSSSY. Phosphoserine occurs at positions 720, 723, 746, and 753. A compositionally biased stretch (polar residues) spans 772–782; the sequence is PSTSGSASQDL. 2 stretches are compositionally biased toward low complexity: residues 783–798 and 811–829; these read SPPR…TPRT and ASPS…RSAS. Polar residues predominate over residues 837–846; sequence QQQPHLQRSS. The segment covering 865-876 has biased composition (low complexity); that stretch reads AGSPTSAPPTSN. Residues 984–995 are compositionally biased toward basic residues; that stretch reads THPHLAHPHQHP. Low complexity-rich tracts occupy residues 996 to 1012 and 1023 to 1055; these read HPAA…LATP and SATS…SSSA. Polar residues predominate over residues 1056–1070; sequence MFHTSSLRNEQSSDL.

During embryogenesis expression is primarily in endo- and mesodermal cell layers. Ovary, embryos, larval and pupal imaginal disks.

The protein localises to the nucleus. Is a potent antagonist of neurogenic gene activity during sensory organ development. The expression of distinct cell fates by the trichogen (shaft) / tormogen (socket) sister cell pair depends on the level of H activity. A certain threshold level of H activity is required, below which both sister cells adopt the tormogen fate. The protein is Protein hairless (H) of Drosophila melanogaster (Fruit fly).